The following is a 74-amino-acid chain: Spore germination protein GerE (74 aa).

Residues 5-70 form the HTH luxR-type domain; that stretch reads EFQSKPLLTK…QAVVELLRMG (66 aa). Positions 29 to 48 form a DNA-binding region, H-T-H motif; the sequence is TKEIASELFISEKTVRNHIS.

Its function is as follows. Involved in the regulation of spore formation. Directs the transcription of several genes that encode structural components of the protein coat that encases the mature spore (CotB, CotC, CotG, CotS, CotV, CotW, CotX, CotY and CotZ). Also controls the cgeAB and cgeCDE operons. In Bacillus subtilis (strain 168), this protein is Spore germination protein GerE (gerE).